The following is a 118-amino-acid chain: Large ribosomal subunit protein uL24 (118 aa).

It belongs to the universal ribosomal protein uL24 family. In terms of assembly, part of the 50S ribosomal subunit.

Its function is as follows. One of two assembly initiator proteins, it binds directly to the 5'-end of the 23S rRNA, where it nucleates assembly of the 50S subunit. One of the proteins that surrounds the polypeptide exit tunnel on the outside of the subunit. This chain is Large ribosomal subunit protein uL24, found in Synechococcus sp. (strain CC9605).